The chain runs to 240 residues: Probable transcriptional regulatory protein Nmul_A2722 (240 aa).

Belongs to the TACO1 family.

It localises to the cytoplasm. The protein is Probable transcriptional regulatory protein Nmul_A2722 of Nitrosospira multiformis (strain ATCC 25196 / NCIMB 11849 / C 71).